A 265-amino-acid polypeptide reads, in one-letter code: Probable U2 small nuclear ribonucleoprotein A' (265 aa).

4 LRR repeats span residues 20–41, 43–64, 65–86, and 89–110; these read RERELDLRGYKIPQIENLGATL, QFDTIDLSDNDLRKLDNLPHLP, RLKCLLLNNNRILRISEGLEEA, and NLGSIILTGNNLQELSDLEPLV. In terms of domain architecture, LRRCT spans 123 to 161; sequence NPVSTKPNYREYMAYKFPQLRLLDFRKIKQKDRQAAQEF.

The protein belongs to the U2 small nuclear ribonucleoprotein A family. As to quaternary structure, interacts with the SMN complex.

Its subcellular location is the nucleus. Functionally, involved in pre-mRNA splicing as component of the spliceosome. Associated with sn-RNP U2, where it contributes to the binding of stem loop IV of U2 snRNA. In the germ line, has a role in oogenesis, by regulating spermatogenesis and nurse cell nuclei chromatin decondensation and dispersal, probably by regulating the splicing of proteins necessary for germline differentiation such as the meiotic protein mei-P26. The protein is Probable U2 small nuclear ribonucleoprotein A' (U2A) of Drosophila melanogaster (Fruit fly).